A 380-amino-acid chain; its full sequence is GATOR1 complex protein NPRL2 (380 aa).

The interval 1–133 (MGSSCRIECI…SKQKLVPIMT (133 aa)) is interaction with PDPK1. GDP is bound at residue Arg-78. Residue Arg-78 is modified to Asymmetric dimethylarginine. Residues Lys-158 and Lys-357 each participate in a glycyl lysine isopeptide (Lys-Gly) (interchain with G-Cter in ubiquitin) cross-link.

Belongs to the NPR2 family. As to quaternary structure, within the GATOR complex, component of the GATOR1 subcomplex, made of DEPDC5, NPRL2 and NPRL3. GATOR1 mediates the strong interaction of the GATOR complex with small GTPases Rag (RagA/RRAGA, RagB/RRAGB, RagC/RRAGC and/or RagD/RRAGD) heterodimers. GATOR1 interacts with GPR155/LYCHOS; interaction takes place in presence of cholesterol and prevents interaction between GATOR1 and KICSTOR. Interacts with PDPK1. In the presence of abundant amino acids, ubiquitinated at Lys-158 and Lys-357 via 'Lys-6'-linked ubiquitination by the WDR24 component of the GATOR2 complex, thereby inhibiting the GATOR1 complex and promoting mTORC1 activation. In terms of processing, asymmetric dimethylation at Arg-78 by PRMT1 inhibits the GTPase activator activity of the GATOR1 complex and consequently inducing timely mTORC1 activation under methionine-sufficient conditions.

The protein localises to the lysosome membrane. Catalytic component of the GATOR1 complex, a multiprotein complex that functions as an inhibitor of the amino acid-sensing branch of the mTORC1 pathway. In response to amino acid depletion, the GATOR1 complex has GTPase activating protein (GAP) activity and strongly increases GTP hydrolysis by RagA/RRAGA (or RagB/RRAGB) within heterodimeric Rag complexes, thereby turning them into their inactive GDP-bound form, releasing mTORC1 from lysosomal surface and inhibiting mTORC1 signaling. In the presence of abundant amino acids, the GATOR1 complex is ubiquitinated and inhibited by GATOR2. Within the GATOR1 complex, NPRL2 constitutes the catalytic subunit that mediates the GTPase activator activity and under methionine-sufficient conditions, the GTPase activator activity is inhibited by PRMT1 through methylation and consequently inducing timely mTORC1 activation. In terms of biological role, suppresses Src-dependent tyrosine phosphorylation and activation of PDPK1 and its downstream signaling. Down-regulates PDPK1 kinase activity by interfering with tyrosine phosphorylation at 'Tyr-9', 'Tyr-373' and 'Tyr-376' residues. May act as a tumor suppressor. Suppresses cell growth and enhances sensitivity to various anticancer drugs. In Mus musculus (Mouse), this protein is GATOR1 complex protein NPRL2.